We begin with the raw amino-acid sequence, 621 residues long: Chaperone protein HtpG (621 aa).

Residues 1-341 (MSNQEYTFQT…SEDLPLNVSR (341 aa)) form an a; substrate-binding region. Positions 342 to 547 (EILQQNKILA…GDEQNAMMAN (206 aa)) are b. A c region spans residues 548–621 (WMRQMGQSVP…RLNSVLLKAL (74 aa)).

This sequence belongs to the heat shock protein 90 family. In terms of assembly, homodimer.

It is found in the cytoplasm. Its function is as follows. Molecular chaperone. Has ATPase activity. The protein is Chaperone protein HtpG of Helicobacter pylori (strain ATCC 700392 / 26695) (Campylobacter pylori).